An 864-amino-acid chain; its full sequence is MSSLYRDLDSDVSSTRIVRHSYNVYRGSSPSSQNRLESRIRELEDSLDSEREMRLRYEKQSAELTFQLDQMADRLEDAMGTSTTVSEVSRKREAEVNKVRKDLELSCAQFEATEQNMRRRHQEALNDLTDQLEHMGKSKSRAEKEKNQLIIEIDSLQAMNDGLQKSKMSADSKIDALEGSNSRLKAAVDDLTRQLNDSNLSKARLTQENFDLQHQVQELDGANAGLAKAKAQLQILCDDLKRNLDDESRQRQNLQVQLAAIQSDYDNLNARYEEESENASSLRAQLSSLSATYAALKTKYDKELMAKQEELEEIRRRLSIKIQELEDTCEQLRTRCNTLEKTKNKLTVEIREITIELENTQIIVQDLTKRNRQLENENAALQKRCDDLSAENGQLRNEKANLEAECARLKVANAELAEKNANLERENAGLQNALREANNELKAANRTINELTALKAQLEAERDNLASALRDTEEALRDAEAKLAAAQAALNQLRSEMEQRLREKDEEIDSIRKSSARAIDELQRTLVEVETRYKTEISRIKKKYETDIRELEGALDNANRANAEYLKQIKSLQNRNRELELQLEEATRQLDDTRNQLSVSERKRITIQQELEDARSLLEHAERARKNAENELGEVTVRLTEVQLQVTALTNDKRRMEADIAAMQSDLDDALNGQRAAEERADRLQAEVNRLADELRQEQDNYKNAESLRKQLEIEIREITVRLEEAEAFAQREGKRQIAKLQARIRDLENELEADQRRLREAAASARKFERQWKETVQASDEDRRQVAELTSITDQLTMKCKTYKRMIEEAEDVASITMNKYRKAQSLIDEAEQRADMAEKNLQTVRRSRSMSVSREVTRVVRV.

Positions 1–30 are nonhelical region; that stretch reads MSSLYRDLDSDVSSTRIVRHSYNVYRGSSP. The stretch at 31–853 forms a coiled coil; sequence SSQNRLESRI…QTVRRSRSMS (823 aa). The segment at 854 to 864 is nonhelical region; it reads VSREVTRVVRV.

It belongs to the paramyosin family. In terms of assembly, homodimer. In terms of processing, phosphorylated. In terms of tissue distribution, most abundantly expressed in muscle tissues from byssus retractor and adductor muscles. Low expression in foot, gill, inner mantle and outer mantle.

The protein resides in the cytoplasm. It localises to the myofibril. Functionally, paramyosin is a major structural component of many thick filaments isolated from invertebrate muscles. The polypeptide is Paramyosin (Mytilus galloprovincialis (Mediterranean mussel)).